A 662-amino-acid chain; its full sequence is UvrABC system protein B (662 aa).

The region spanning 31–188 (DNIEGGEKAQ…NDLVDIQFER (158 aa)) is the Helicase ATP-binding domain. Position 44–51 (44–51 (GATGTGKT)) interacts with ATP. The Beta-hairpin signature appears at 97-120 (YYDYYQPEAYVPSSDTYIEKDSSV). The Helicase C-terminal domain occupies 435 to 601 (QIDDLLGEIN…TIKKEIRDLI (167 aa)). One can recognise a UVR domain in the interval 626–661 (KDMIKKLEGQMQEAAGLLDFELAAQIRDMILEIKAM).

It belongs to the UvrB family. Forms a heterotetramer with UvrA during the search for lesions. Interacts with UvrC in an incision complex.

Its subcellular location is the cytoplasm. Functionally, the UvrABC repair system catalyzes the recognition and processing of DNA lesions. A damage recognition complex composed of 2 UvrA and 2 UvrB subunits scans DNA for abnormalities. Upon binding of the UvrA(2)B(2) complex to a putative damaged site, the DNA wraps around one UvrB monomer. DNA wrap is dependent on ATP binding by UvrB and probably causes local melting of the DNA helix, facilitating insertion of UvrB beta-hairpin between the DNA strands. Then UvrB probes one DNA strand for the presence of a lesion. If a lesion is found the UvrA subunits dissociate and the UvrB-DNA preincision complex is formed. This complex is subsequently bound by UvrC and the second UvrB is released. If no lesion is found, the DNA wraps around the other UvrB subunit that will check the other stand for damage. The polypeptide is UvrABC system protein B (Streptococcus gordonii (strain Challis / ATCC 35105 / BCRC 15272 / CH1 / DL1 / V288)).